We begin with the raw amino-acid sequence, 105 residues long: Nucleoid-associated protein Sca_0120 (105 aa).

Residues 1 to 36 (MRGGGNMQQMMKQMQKMQKKMAEEQEKLKDEKVEGS) form a disordered region. Residues 7-16 (MQQMMKQMQK) are compositionally biased toward low complexity. The segment covering 20-34 (KMAEEQEKLKDEKVE) has biased composition (basic and acidic residues).

This sequence belongs to the YbaB/EbfC family. In terms of assembly, homodimer.

It is found in the cytoplasm. Its subcellular location is the nucleoid. Its function is as follows. Binds to DNA and alters its conformation. May be involved in regulation of gene expression, nucleoid organization and DNA protection. The polypeptide is Nucleoid-associated protein Sca_0120 (Staphylococcus carnosus (strain TM300)).